A 151-amino-acid polypeptide reads, in one-letter code: Large ribosomal subunit protein bL9 (151 aa).

Belongs to the bacterial ribosomal protein bL9 family.

In terms of biological role, binds to the 23S rRNA. The sequence is that of Large ribosomal subunit protein bL9 from Thermosipho melanesiensis (strain DSM 12029 / CIP 104789 / BI429).